Here is a 201-residue protein sequence, read N- to C-terminus: Imidazoleglycerol-phosphate dehydratase (201 aa).

Belongs to the imidazoleglycerol-phosphate dehydratase family.

Its subcellular location is the cytoplasm. It carries out the reaction D-erythro-1-(imidazol-4-yl)glycerol 3-phosphate = 3-(imidazol-4-yl)-2-oxopropyl phosphate + H2O. It functions in the pathway amino-acid biosynthesis; L-histidine biosynthesis; L-histidine from 5-phospho-alpha-D-ribose 1-diphosphate: step 6/9. The sequence is that of Imidazoleglycerol-phosphate dehydratase from Prochlorococcus marinus (strain MIT 9301).